Consider the following 350-residue polypeptide: Dihydroorotase (350 aa).

Residues histidine 17 and histidine 19 each contribute to the Zn(2+) site. Residues 19-21 (HFR) and asparagine 45 each bind substrate. Residues lysine 103, histidine 140, and histidine 178 each contribute to the Zn(2+) site. The residue at position 103 (lysine 103) is an N6-carboxylysine. Histidine 140 provides a ligand contact to substrate. Residue leucine 223 coordinates substrate. Aspartate 251 lines the Zn(2+) pocket. Aspartate 251 is an active-site residue. Histidine 255 and alanine 267 together coordinate substrate.

The protein belongs to the metallo-dependent hydrolases superfamily. DHOase family. Class II DHOase subfamily. Homodimer. Zn(2+) serves as cofactor.

It carries out the reaction (S)-dihydroorotate + H2O = N-carbamoyl-L-aspartate + H(+). Its pathway is pyrimidine metabolism; UMP biosynthesis via de novo pathway; (S)-dihydroorotate from bicarbonate: step 3/3. Its function is as follows. Catalyzes the reversible cyclization of carbamoyl aspartate to dihydroorotate. The chain is Dihydroorotase from Photorhabdus laumondii subsp. laumondii (strain DSM 15139 / CIP 105565 / TT01) (Photorhabdus luminescens subsp. laumondii).